The following is a 357-amino-acid chain: Quinolinate synthase (357 aa).

Iminosuccinate-binding residues include His50 and Ser71. Residue Cys116 coordinates [4Fe-4S] cluster. Iminosuccinate-binding positions include 142–144 (YAN) and Ser159. Cys203 is a binding site for [4Fe-4S] cluster. Iminosuccinate is bound by residues 229–231 (HPE) and Thr246. Cys300 lines the [4Fe-4S] cluster pocket.

The protein belongs to the quinolinate synthase family. Type 1 subfamily. Requires [4Fe-4S] cluster as cofactor.

The protein localises to the cytoplasm. It carries out the reaction iminosuccinate + dihydroxyacetone phosphate = quinolinate + phosphate + 2 H2O + H(+). It functions in the pathway cofactor biosynthesis; NAD(+) biosynthesis; quinolinate from iminoaspartate: step 1/1. Catalyzes the condensation of iminoaspartate with dihydroxyacetone phosphate to form quinolinate. The chain is Quinolinate synthase from Shewanella oneidensis (strain ATCC 700550 / JCM 31522 / CIP 106686 / LMG 19005 / NCIMB 14063 / MR-1).